The primary structure comprises 67 residues: Bombesin (67 aa).

A signal peptide spans 1–30; that stretch reads MLLLSAVKTLLLAWLGIVLVFMSIIKSAML. Positions 31–49 are excised as a propeptide; it reads DFLQEAGKLEGIETYKKEA. A Pyrrolidone carboxylic acid modification is found at Gln50. At Met64 the chain carries Methionine amide.

As to expression, expressed by the skin glands.

The protein localises to the secreted. In terms of biological role, stimulates smooth muscle contraction in isolated rat stomach strip. This chain is Bombesin, found in Rana shuchinae (Sichuan frog).